Reading from the N-terminus, the 300-residue chain is Dioxygenase FUM3 (300 aa).

Fe cation is bound by residues H146, D148, and H222.

The protein belongs to the PhyH family. Homodimer. The cofactor is Fe cation.

The protein operates within mycotoxin biosynthesis. Dioxygenase; part of the gene cluster that mediates the biosynthesis of fumonisins B1 (FB1), B2 (FB2), B3 (FB3), and B4 (FB4), which are carcinogenic mycotoxins. Within the pathway, FUM3 performs the C-5 hydroxylation present in FB1 and FB2 and which occurs late in the biosynthesis. The biosynthesis starts with the FUM1-catalyzed carbon chain assembly from one molecule of acetyl-CoA, eight molecules of malonyl-CoA, and two molecules of methionine (in S-adenosyl form). The C18 polyketide chain is released from the enzyme by a nucleophilic attack of a carbanion, which is derived from R-carbon of alanine by decarboxylation, on the carbonyl carbon of polyketide acyl chain. This step is catalyzed by the pyridoxal 5'-phosphate-dependent aminoacyl transferase FUM8. The resultant 3-keto intermediate is then stereospecifically reduced to a 3-hydroxyl product by reductase FUM13. Subsequent oxidations at C-10 by the cytochrome P450 monooxygenase FUM2, C-14 and C-15 by FUM6, FUM12 or FUM15, tricarballylic esterification of the hydroxyl groups on C-14 and C-15 by acyltransferase FUM14, and C-5 hydroxylation by 2-keto-glutarate-dependent dioxygenase FUM3 furnish the biosynthesis of fumonisins. The tricarballylic moieties are most likely derived from the citric acid cycle, and their addition to the carbon backbone may involve FUM7, FUM10, FUM11 and FUM14. In Gibberella moniliformis (strain M3125 / FGSC 7600) (Maize ear and stalk rot fungus), this protein is Dioxygenase FUM3.